The following is a 348-amino-acid chain: Nuclear receptor subfamily 1 group I member 3 (348 aa).

The nuclear receptor DNA-binding region spans 8 to 83 (PRSCMVCGDR…AGMKKEMILS (76 aa)). The NR C4-type zinc finger occupies 11 to 31 (CMVCGDRATGYHFHALTCEGC). Thr38 bears the Phosphothreonine; by PKC mark. An NR C4-type zinc finger spans residues 47–71 (CPFAGSCKVNKAQRRHCPACRLQKC). One can recognise an NR LBD domain in the interval 109–348 (GQQELVQTLL…MMPLLQEICS (240 aa)).

This sequence belongs to the nuclear hormone receptor family. NR1 subfamily. Heterodimer of NR1I3 and RXR. Interacts with PSMC4. Interacts with ECT2. Directly interacts with DNAJC7; this complex may also include HSP90. Interacts with CRY1. Interacts with CRY2 in a ligand-dependent manner. Phosphorylated at Thr-38 by PKC, dephosphorylation of Thr-38 is required for nuclear translocation and activation.

The protein localises to the nucleus. It is found in the cytoplasm. Its subcellular location is the cytoskeleton. Its function is as follows. Binds and transactivates the retinoic acid response elements that control expression of the retinoic acid receptor beta 2 and alcohol dehydrogenase 3 genes. Transactivates both the phenobarbital responsive element module of the human CYP2B6 gene and the CYP3A4 xenobiotic response element. The chain is Nuclear receptor subfamily 1 group I member 3 (NR1I3) from Pusa sibirica (Baikal seal).